A 534-amino-acid polypeptide reads, in one-letter code: Bifunctional purine biosynthesis protein PurH (534 aa).

The 146-residue stretch at 6-151 (TRLPIRRALI…KNHKDVAIVV (146 aa)) folds into the MGS-like domain.

The protein belongs to the PurH family.

It carries out the reaction (6R)-10-formyltetrahydrofolate + 5-amino-1-(5-phospho-beta-D-ribosyl)imidazole-4-carboxamide = 5-formamido-1-(5-phospho-D-ribosyl)imidazole-4-carboxamide + (6S)-5,6,7,8-tetrahydrofolate. It catalyses the reaction IMP + H2O = 5-formamido-1-(5-phospho-D-ribosyl)imidazole-4-carboxamide. It functions in the pathway purine metabolism; IMP biosynthesis via de novo pathway; 5-formamido-1-(5-phospho-D-ribosyl)imidazole-4-carboxamide from 5-amino-1-(5-phospho-D-ribosyl)imidazole-4-carboxamide (10-formyl THF route): step 1/1. Its pathway is purine metabolism; IMP biosynthesis via de novo pathway; IMP from 5-formamido-1-(5-phospho-D-ribosyl)imidazole-4-carboxamide: step 1/1. In Pseudomonas syringae pv. tomato (strain ATCC BAA-871 / DC3000), this protein is Bifunctional purine biosynthesis protein PurH.